A 204-amino-acid chain; its full sequence is ATP phosphoribosyltransferase (204 aa).

The protein belongs to the ATP phosphoribosyltransferase family. Short subfamily. In terms of assembly, heteromultimer composed of HisG and HisZ subunits.

The protein localises to the cytoplasm. It carries out the reaction 1-(5-phospho-beta-D-ribosyl)-ATP + diphosphate = 5-phospho-alpha-D-ribose 1-diphosphate + ATP. The protein operates within amino-acid biosynthesis; L-histidine biosynthesis; L-histidine from 5-phospho-alpha-D-ribose 1-diphosphate: step 1/9. In terms of biological role, catalyzes the condensation of ATP and 5-phosphoribose 1-diphosphate to form N'-(5'-phosphoribosyl)-ATP (PR-ATP). Has a crucial role in the pathway because the rate of histidine biosynthesis seems to be controlled primarily by regulation of HisG enzymatic activity. This is ATP phosphoribosyltransferase from Staphylococcus aureus (strain USA300).